The primary structure comprises 414 residues: Serine hydroxymethyltransferase (414 aa).

(6S)-5,6,7,8-tetrahydrofolate-binding positions include L121 and 125 to 127 (GHL). At K230 the chain carries N6-(pyridoxal phosphate)lysine.

Belongs to the SHMT family. As to quaternary structure, homodimer. Requires pyridoxal 5'-phosphate as cofactor.

It localises to the cytoplasm. The catalysed reaction is (6R)-5,10-methylene-5,6,7,8-tetrahydrofolate + glycine + H2O = (6S)-5,6,7,8-tetrahydrofolate + L-serine. The protein operates within one-carbon metabolism; tetrahydrofolate interconversion. It functions in the pathway amino-acid biosynthesis; glycine biosynthesis; glycine from L-serine: step 1/1. Functionally, catalyzes the reversible interconversion of serine and glycine with tetrahydrofolate (THF) serving as the one-carbon carrier. This reaction serves as the major source of one-carbon groups required for the biosynthesis of purines, thymidylate, methionine, and other important biomolecules. Also exhibits THF-independent aldolase activity toward beta-hydroxyamino acids, producing glycine and aldehydes, via a retro-aldol mechanism. The chain is Serine hydroxymethyltransferase from Acidithiobacillus ferrooxidans (strain ATCC 23270 / DSM 14882 / CIP 104768 / NCIMB 8455) (Ferrobacillus ferrooxidans (strain ATCC 23270)).